Reading from the N-terminus, the 221-residue chain is Kinetochore protein Spc25 (221 aa).

The stretch at V63–E114 forms a coiled coil.

It belongs to the SPC25 family. As to quaternary structure, component of the Ndc80 complex, which is composed of Ndc80, Nuf2 and Spc25.

It localises to the nucleus. The protein resides in the chromosome. Its subcellular location is the centromere. It is found in the kinetochore. Acts as a component of the essential kinetochore-associated Ndc80 complex, which is required for chromosome segregation and spindle checkpoint activity during meiosis and mitosis. Required for kinetochore integrity and the organization of stable microtubule binding sites in the outer plate of the kinetochore. Participates in SAC signaling that responds specifically to disruptions in spindle microtubule dynamics. The NDC80 complex synergistically enhances the affinity of the SKA1 complex for microtubules and may allow the NDC80 complex to track depolymerizing microtubules. This chain is Kinetochore protein Spc25, found in Drosophila eugracilis (Fruit fly).